The chain runs to 871 residues: Protein argonaute-2 (871 aa).

The PAZ domain maps to 232-351 (PVIEFMCEVL…LPLEVCNIVA (120 aa)). Interaction with guide RNA stretches follow at residues 314–319 (YFKDRH) and 536–578 (GKTP…LCLK). In terms of domain architecture, Piwi spans 529-830 (LVVVILPGKT…VAFRARYHLV (302 aa)). The segment at 599–602 (FQQP) is interaction with GW182 family members. Asp609 serves as a coordination point for a divalent metal cation. Positions 662–672 (LIQFYKSTRFK) are interaction with GW182 family members. Asp681 provides a ligand contact to a divalent metal cation. Interaction with guide RNA stretches follow at residues 721 to 722 (KR), 765 to 773 (HAGIQGTSR), and 802 to 824 (YVRC…VAFR). Position 819 (His819) interacts with a divalent metal cation. Residues 834-856 (HDSAEGSHTSGQSNGRDQQALAK) are disordered. Residues 839 to 850 (GSHTSGQSNGRD) show a composition bias toward polar residues.

It belongs to the argonaute family. Ago subfamily. As to quaternary structure, component of the RISC loading complex (RLC), or micro-RNA (miRNA) loading complex (miRLC), which is composed of dicer1, ago2 and tarbp2. Note that the trimeric RLC/miRLC is also referred to as RISC. Mg(2+) serves as cofactor. It depends on Mn(2+) as a cofactor.

The protein localises to the cytoplasm. It is found in the P-body. The catalysed reaction is Endonucleolytic cleavage to 5'-phosphomonoester.. Its function is as follows. Required for RNA-mediated gene silencing (RNAi) by the RNA-induced silencing complex (RISC). The 'minimal RISC' appears to include ago2 bound to a short guide RNA such as a microRNA (miRNA) or short interfering RNA (siRNA). These guide RNAs direct RISC to complementary mRNAs that are targets for RISC-mediated gene silencing. The precise mechanism of gene silencing depends on the degree of complementarity between the miRNA or siRNA and its target. Binding of RISC to a perfectly complementary mRNA generally results in silencing due to endonucleolytic cleavage of the mRNA specifically by ago2. Binding of RISC to a partially complementary mRNA results in silencing through inhibition of translation, and this is independent of endonuclease activity. The inhibition of translational initiation leads to the accumulation of the affected mRNA in cytoplasmic processing bodies (P-bodies), where mRNA degradation may subsequently occur. The protein is Protein argonaute-2 (ago2) of Xenopus tropicalis (Western clawed frog).